We begin with the raw amino-acid sequence, 529 residues long: Glycylpeptide N-tetradecanoyltransferase 2 (529 aa).

The disordered stretch occupies residues 1-82; sequence MAEDSESAAS…QEIKIQQSSK (82 aa). The span at 15–32 shows a compositional bias: acidic residues; that stretch reads ELDDQDTCGIDGDNEEET. Position 38 is a phosphoserine (serine 38). The span at 46–57 shows a compositional bias: basic residues; the sequence is KKKKKKQKRKKE. Positions 61 to 82 are enriched in polar residues; it reads SGGTKSDSASDSQEIKIQQSSK. The tetradecanoyl-CoA site is built by tryptophan 153, leucine 281, valine 283, serine 289, arginine 291, valine 292, and alanine 293.

It belongs to the NMT family.

The protein resides in the cytoplasm. Its subcellular location is the membrane. The catalysed reaction is N-terminal glycyl-[protein] + tetradecanoyl-CoA = N-tetradecanoylglycyl-[protein] + CoA + H(+). The enzyme catalyses N-terminal glycyl-L-lysyl-[protein] + tetradecanoyl-CoA = N-terminal glycyl-(N(6)-tetradecanoyl)-L-lysyl-[protein] + CoA + H(+). Its function is as follows. Adds a myristoyl group to the N-terminal glycine residue of certain cellular and viral proteins. Also able to mediate N-terminal lysine myristoylation of proteins: catalyzes myristoylation of ARF6 on both 'Gly-2' and 'Lys-3'. Lysine myristoylation is required to maintain ARF6 on membranes during the GTPase cycle. In Mus musculus (Mouse), this protein is Glycylpeptide N-tetradecanoyltransferase 2 (Nmt2).